The primary structure comprises 443 residues: Sensor histidine protein kinase HK06 (443 aa).

2 consecutive transmembrane segments (helical) span residues 16-36 (FAIL…TFPF) and 140-160 (ILLL…FVFS). Positions 165–217 (KRLLNPLFYISEVTSKMQDLDDNIRFDESRKDEVGEVGKQINGMYEHLLKVIH) constitute an HAMP domain. Positions 239–443 (GASHELKTPL…EHGMEFKISL (205 aa)) constitute a Histidine kinase domain. Phosphohistidine; by autocatalysis is present on His242.

The protein resides in the cell membrane. It catalyses the reaction ATP + protein L-histidine = ADP + protein N-phospho-L-histidine.. Functionally, member of the two-component regulatory system HK06/RR06 involved in regulation of target genes, including choline-binding protein CbpA. Has been shown in one study to not be required for regulation of expression of choline-binding protein CbpA. This Streptococcus pneumoniae serotype 2 (strain D39 / NCTC 7466) protein is Sensor histidine protein kinase HK06.